The primary structure comprises 337 residues: Heme A synthase (337 aa).

Transmembrane regions (helical) follow at residues 3-23, 94-114, 120-140, 154-174, 191-211, 248-268, and 289-309; these read LARWLWVVAGLVVTIVAIGGI, VIGLAFLLPMMWFWIRGMIPA, LLALFALICGQGALGWYMVAS, LSAHLLTALFLLAGLVWTALD, GVAWMASIILFIQILLGAWVA, FLLHFLHRWWAWVAVIALVVL, and TMVVLGIATVLSEVSLWIAVA. Heme is bound at residue His254. Heme is bound at residue His310. Residues 311–331 form a helical membrane-spanning segment; that stretch reads QLTGALLVISTAWAAHAIGTA.

Belongs to the COX15/CtaA family. Type 2 subfamily. Interacts with CtaB. Heme b is required as a cofactor.

It is found in the cell membrane. It carries out the reaction Fe(II)-heme o + 2 A + H2O = Fe(II)-heme a + 2 AH2. Its pathway is porphyrin-containing compound metabolism; heme A biosynthesis; heme A from heme O: step 1/1. Its function is as follows. Catalyzes the conversion of heme O to heme A by two successive hydroxylations of the methyl group at C8. The first hydroxylation forms heme I, the second hydroxylation results in an unstable dihydroxymethyl group, which spontaneously dehydrates, resulting in the formyl group of heme A. In Erythrobacter litoralis (strain HTCC2594), this protein is Heme A synthase.